Here is a 256-residue protein sequence, read N- to C-terminus: Protein FixA (256 aa).

This sequence belongs to the ETF beta-subunit/FixA family. Heterodimer of FixA and FixB.

It functions in the pathway amine and polyamine metabolism; carnitine metabolism. Functionally, required for anaerobic carnitine reduction. May bring reductant to CaiA. In Salmonella paratyphi B (strain ATCC BAA-1250 / SPB7), this protein is Protein FixA.